The sequence spans 185 residues: Protein GrpE (185 aa).

Residues 1–22 form a disordered region; sequence MTASQEPVDQAPESNEPAPAVP.

Belongs to the GrpE family. As to quaternary structure, homodimer.

It localises to the cytoplasm. Participates actively in the response to hyperosmotic and heat shock by preventing the aggregation of stress-denatured proteins, in association with DnaK and GrpE. It is the nucleotide exchange factor for DnaK and may function as a thermosensor. Unfolded proteins bind initially to DnaJ; upon interaction with the DnaJ-bound protein, DnaK hydrolyzes its bound ATP, resulting in the formation of a stable complex. GrpE releases ADP from DnaK; ATP binding to DnaK triggers the release of the substrate protein, thus completing the reaction cycle. Several rounds of ATP-dependent interactions between DnaJ, DnaK and GrpE are required for fully efficient folding. The chain is Protein GrpE from Bordetella petrii (strain ATCC BAA-461 / DSM 12804 / CCUG 43448).